The primary structure comprises 228 residues: 7-cyano-7-deazaguanine synthase (228 aa).

Residue 9-19 (LSGGPDSTTVL) participates in ATP binding. C193, C203, C206, and C209 together coordinate Zn(2+).

It belongs to the QueC family. Zn(2+) is required as a cofactor.

The enzyme catalyses 7-carboxy-7-deazaguanine + NH4(+) + ATP = 7-cyano-7-deazaguanine + ADP + phosphate + H2O + H(+). It participates in purine metabolism; 7-cyano-7-deazaguanine biosynthesis. In terms of biological role, catalyzes the ATP-dependent conversion of 7-carboxy-7-deazaguanine (CDG) to 7-cyano-7-deazaguanine (preQ(0)). The chain is 7-cyano-7-deazaguanine synthase from Rickettsia peacockii (strain Rustic).